The sequence spans 629 residues: Pumilio homolog 3 (629 aa).

Composition is skewed to basic residues over residues 1 to 10 and 18 to 37; these read MEGKPRKKSF and PSFK…RPFK. The tract at residues 1–92 is disordered; sequence MEGKPRKKSF…EGDERKKPKW (92 aa). Basic and acidic residues predominate over residues 62 to 92; that stretch reads KPTDGKFAKKRKFPGDRIKQEEGDERKKPKW. The Nuclear localization signal signature appears at 88 to 100; sequence KKPKWDEFKQKKK. The PUM-HD domain maps to 120 to 473; sequence RAKQVWEMVR…ELLEAASPSL (354 aa). 11 Pumilio repeats span residues 160–195, 196–231, 232–260, 272–308, 309–344, 345–380, 381–418, 419–487, 488–534, 535–579, and 580–618; these read HDST…LSKS, KYAR…MLRH, SEAS…ELYG, PTLE…VIKH, SLVH…MAHT, HDGA…FAMG, EYAH…IISN, KHGK…MVMD, KSCC…MAEH, PAGH…WASV, and NRGA…LQNS.

In adult, expressed at high levels in eye and ovary and at lower levels in brain, testis and head kidney. In the adult ovary, prominently expressed in early immature follicles.

The protein localises to the nucleus. It localises to the nucleolus. Its subcellular location is the nucleoplasm. The protein resides in the chromosome. Inhibits the poly(ADP-ribosyl)ation activity of PARP1 and the degradation of PARP1 by CASP3 following genotoxic stress. Binds to double-stranded RNA or DNA without sequence specificity. Involved in development of the eye and of primordial germ cells. This is Pumilio homolog 3 (pum3) from Danio rerio (Zebrafish).